We begin with the raw amino-acid sequence, 378 residues long: Ferrochelatase (378 aa).

Fe cation-binding residues include H214 and E295.

Belongs to the ferrochelatase family.

The protein localises to the cytoplasm. It carries out the reaction heme b + 2 H(+) = protoporphyrin IX + Fe(2+). The protein operates within porphyrin-containing compound metabolism; protoheme biosynthesis; protoheme from protoporphyrin-IX: step 1/1. Its function is as follows. Catalyzes the ferrous insertion into protoporphyrin IX. The protein is Ferrochelatase of Hydrogenovibrio crunogenus (strain DSM 25203 / XCL-2) (Thiomicrospira crunogena).